The sequence spans 263 residues: Auxin-responsive protein IAA3 (263 aa).

Disordered regions lie at residues 1–54 and 76–121; these read MSPP…RRPA and RVFP…PAAK. Positions 28 to 38 are enriched in basic and acidic residues; the sequence is RADDVDLKGTE. The short motif at 39–43 is the EAR-like (transcriptional repression) element; sequence LRLGL. Residues 158-245 form the PB1 domain; it reads FLYVKVSMDG…SCRRLRIMKG (88 aa).

Belongs to the Aux/IAA family. In terms of assembly, homodimers and heterodimers. Highly expressed in flowers. Expressed in roots and shoots.

Its subcellular location is the nucleus. Its function is as follows. Aux/IAA proteins are short-lived transcriptional factors that function as repressors of early auxin response genes at low auxin concentrations. The polypeptide is Auxin-responsive protein IAA3 (IAA3) (Oryza sativa subsp. japonica (Rice)).